We begin with the raw amino-acid sequence, 285 residues long: MSSGRLLLGATPLGQPSDASPRLAAALATADVVAAEDTRRVRKLAKALDIRIGGRVVSLFDRVEALRVTALLDAINNGATVLVVSDAGTPVISDPGYRLVAACIDAGVSVTCLPGPSAVTTALVISGLPAEKFCFEGFAPRKGAARRAWLAELAEERRTCVFFESPRRLAACLNDAVEQLGGARPAAICRELTKVHEEVVRGSLDELAIWAAGGVLGEITVVVAGAAPHAELSSLIAQVEEFVAAGIRVKDACSEVAAAHPGVRTRQLYDAVLQSRRETGGPAQP.

This sequence belongs to the methyltransferase superfamily. RsmI family.

Its subcellular location is the cytoplasm. The enzyme catalyses cytidine(1402) in 16S rRNA + S-adenosyl-L-methionine = 2'-O-methylcytidine(1402) in 16S rRNA + S-adenosyl-L-homocysteine + H(+). Its function is as follows. Catalyzes the 2'-O-methylation of the ribose of cytidine 1402 (C1402) in 16S rRNA. This is Ribosomal RNA small subunit methyltransferase I from Mycobacterium tuberculosis (strain CDC 1551 / Oshkosh).